The primary structure comprises 284 residues: Pantothenate synthetase (284 aa).

Residue 30 to 37 (MGNLHEGH) participates in ATP binding. His37 acts as the Proton donor in catalysis. Position 61 (Gln61) interacts with (R)-pantoate. Gln61 lines the beta-alanine pocket. An ATP-binding site is contributed by 149 to 152 (GEKD). Gln155 is a (R)-pantoate binding site. Residues Val178 and 186–189 (LSSR) contribute to the ATP site.

Belongs to the pantothenate synthetase family. Homodimer.

The protein localises to the cytoplasm. It carries out the reaction (R)-pantoate + beta-alanine + ATP = (R)-pantothenate + AMP + diphosphate + H(+). Its pathway is cofactor biosynthesis; (R)-pantothenate biosynthesis; (R)-pantothenate from (R)-pantoate and beta-alanine: step 1/1. Functionally, catalyzes the condensation of pantoate with beta-alanine in an ATP-dependent reaction via a pantoyl-adenylate intermediate. In Yersinia enterocolitica serotype O:8 / biotype 1B (strain NCTC 13174 / 8081), this protein is Pantothenate synthetase.